We begin with the raw amino-acid sequence, 223 residues long: Deoxyribose-phosphate aldolase (223 aa).

The active-site Proton donor/acceptor is D92. The Schiff-base intermediate with acetaldehyde role is filled by K154. Residue K182 is the Proton donor/acceptor of the active site.

It belongs to the DeoC/FbaB aldolase family. DeoC type 1 subfamily.

The protein localises to the cytoplasm. It carries out the reaction 2-deoxy-D-ribose 5-phosphate = D-glyceraldehyde 3-phosphate + acetaldehyde. Its pathway is carbohydrate degradation; 2-deoxy-D-ribose 1-phosphate degradation; D-glyceraldehyde 3-phosphate and acetaldehyde from 2-deoxy-alpha-D-ribose 1-phosphate: step 2/2. Functionally, catalyzes a reversible aldol reaction between acetaldehyde and D-glyceraldehyde 3-phosphate to generate 2-deoxy-D-ribose 5-phosphate. The chain is Deoxyribose-phosphate aldolase from Haemophilus influenzae (strain ATCC 51907 / DSM 11121 / KW20 / Rd).